A 511-amino-acid chain; its full sequence is Maturase K (511 aa).

It belongs to the intron maturase 2 family. MatK subfamily.

The protein resides in the plastid. The protein localises to the chloroplast. Usually encoded in the trnK tRNA gene intron. Probably assists in splicing its own and other chloroplast group II introns. The chain is Maturase K from Nardus stricta (Mat-grass).